A 219-amino-acid polypeptide reads, in one-letter code: NADH-quinone oxidoreductase subunit C (219 aa).

This sequence belongs to the complex I 30 kDa subunit family. In terms of assembly, NDH-1 is composed of 14 different subunits. Subunits NuoB, C, D, E, F, and G constitute the peripheral sector of the complex.

The protein localises to the cell inner membrane. The enzyme catalyses a quinone + NADH + 5 H(+)(in) = a quinol + NAD(+) + 4 H(+)(out). Its function is as follows. NDH-1 shuttles electrons from NADH, via FMN and iron-sulfur (Fe-S) centers, to quinones in the respiratory chain. The immediate electron acceptor for the enzyme in this species is believed to be ubiquinone. Couples the redox reaction to proton translocation (for every two electrons transferred, four hydrogen ions are translocated across the cytoplasmic membrane), and thus conserves the redox energy in a proton gradient. In Methylorubrum populi (strain ATCC BAA-705 / NCIMB 13946 / BJ001) (Methylobacterium populi), this protein is NADH-quinone oxidoreductase subunit C.